We begin with the raw amino-acid sequence, 147 residues long: Bis(5'-nucleosyl)-tetraphosphatase [asymmetrical] (147 aa).

In terms of domain architecture, Nudix hydrolase spans 1–139 (MALRACGLII…EMKAALQEGH (139 aa)). An N-acetylalanine modification is found at A2. The Nudix box motif lies at 43–64 (GHVEPGEDDLETALRETQEEAG).

It belongs to the Nudix hydrolase family. It depends on a divalent metal cation as a cofactor.

The catalysed reaction is P(1),P(4)-bis(5'-guanosyl) tetraphosphate + H2O = GMP + GTP + 2 H(+). It carries out the reaction a 5'-end CoA-ribonucleoside in mRNA + H2O = a 5'-end phospho-adenosine-phospho-ribonucleoside in mRNA + (R)-4'-phosphopantetheine + 2 H(+). It catalyses the reaction a 5'-end FAD-phospho-ribonucleoside in mRNA + H2O = a 5'-end phospho-adenosine-phospho-ribonucleoside in mRNA + FMN + 2 H(+). In terms of biological role, catalyzes the asymmetric hydrolysis of diadenosine 5',5'''-P1,P4-tetraphosphate (Ap4A) to yield AMP and ATP. Exhibits decapping activity towards FAD-capped RNAs and dpCoA-capped RNAs in vitro. This is Bis(5'-nucleosyl)-tetraphosphatase [asymmetrical] (NUDT2) from Homo sapiens (Human).